We begin with the raw amino-acid sequence, 248 residues long: 2,3-bisphosphoglycerate-dependent phosphoglycerate mutase (248 aa).

Substrate is bound by residues 8-15, 21-22, Arg60, 87-90, Lys98, 114-115, and 183-184; these read RHGESEWN, TG, ERHY, RR, and GN. His9 (tele-phosphohistidine intermediate) is an active-site residue. Catalysis depends on Glu87, which acts as the Proton donor/acceptor.

The protein belongs to the phosphoglycerate mutase family. BPG-dependent PGAM subfamily.

The catalysed reaction is (2R)-2-phosphoglycerate = (2R)-3-phosphoglycerate. The protein operates within carbohydrate degradation; glycolysis; pyruvate from D-glyceraldehyde 3-phosphate: step 3/5. Functionally, catalyzes the interconversion of 2-phosphoglycerate and 3-phosphoglycerate. The polypeptide is 2,3-bisphosphoglycerate-dependent phosphoglycerate mutase (Borrelia garinii subsp. bavariensis (strain ATCC BAA-2496 / DSM 23469 / PBi) (Borreliella bavariensis)).